The sequence spans 347 residues: RNA 3'-terminal phosphate cyclase (347 aa).

ATP-binding positions include Q101 and 286-289 (HMAD). Residue H312 is the Tele-AMP-histidine intermediate of the active site.

This sequence belongs to the RNA 3'-terminal cyclase family. Type 1 subfamily.

It localises to the cytoplasm. The enzyme catalyses a 3'-end 3'-phospho-ribonucleotide-RNA + ATP = a 3'-end 2',3'-cyclophospho-ribonucleotide-RNA + AMP + diphosphate. Catalyzes the conversion of 3'-phosphate to a 2',3'-cyclic phosphodiester at the end of RNA. The mechanism of action of the enzyme occurs in 3 steps: (A) adenylation of the enzyme by ATP; (B) transfer of adenylate to an RNA-N3'P to produce RNA-N3'PP5'A; (C) and attack of the adjacent 2'-hydroxyl on the 3'-phosphorus in the diester linkage to produce the cyclic end product. The biological role of this enzyme is unknown but it is likely to function in some aspects of cellular RNA processing. This Pyrobaculum neutrophilum (strain DSM 2338 / JCM 9278 / NBRC 100436 / V24Sta) (Thermoproteus neutrophilus) protein is RNA 3'-terminal phosphate cyclase.